The following is a 1408-amino-acid chain: Palladin (1408 aa).

Residues 69–229 (SKSPISLCET…SASQSPTADQ (161 aa)) form a disordered region. Polar residues-rich tracts occupy residues 149–169 (PNPS…QSQL) and 193–229 (RSPN…TADQ). Residue Ser194 is modified to Phosphoserine. Ig-like C2-type domains lie at 278–367 (PRFI…AEVF) and 448–546 (PVFT…LVIT). Intrachain disulfides connect Cys299/Cys351 and Cys469/Cys528. Positions 569 to 573 (FPPPP) are interaction with VASP. 2 disordered regions span residues 631–660 (NGKA…LAKP) and 687–727 (PPGV…VPSE). Phosphoserine is present on Ser639. Position 642 is a phosphothreonine (Thr642). Ser648 is subject to Phosphoserine. The segment at 653 to 683 (PPPLLAKPKLDPLKLQQLQNQVRLEQEACAW) is interaction with LASP1. The segment at 683–713 (WPPAPPGVPCNSSSSGSSAPPSPPFPPPPPA) is interaction with SORBS2, SPIN90 and SRC. The span at 691-701 (PCNSSSSGSSA) shows a compositional bias: low complexity. Phosphoserine occurs at positions 700, 704, and 744. Over residues 702-714 (PPSPPFPPPPPAF) the composition is skewed to pro residues. 3 disordered regions span residues 758–854 (NLGP…RFGP), 882–904 (KGVT…SDEE), and 960–981 (ETAA…LDGQ). A compositionally biased stretch (low complexity) spans 765-779 (LPTPTSSPSSSSLPS). 3 stretches are compositionally biased toward pro residues: residues 780 to 797 (PLSP…PPFV), 807 to 818 (SPSPPPPPPPVF), and 828 to 840 (DVFP…PPLP). An interaction with EPS8 region spans residues 782 to 842 (SPTPRPFGRA…PPPPPPLPSS (61 aa)). The interval 807–842 (SPSPPPPPPPVFSPSAAYPVPDVFPLPPPPPPLPSS) is interaction with SORBS2, SPIN90, SRC and PFN1. Positions 830 to 834 (FPLPP) are interaction with VASP. Ser901 is modified (phosphoserine). 2 positions are modified to phosphoserine: Ser1004 and Ser1009. The region spanning 1026–1110 (PFFEMKLKHY…MAANPQGRVS (85 aa)) is the Ig-like C2-type 3 domain. The segment at 1121 to 1150 (NQRGRSPRSPSGHPHARRPRSRSRDSGDEN) is disordered. The span at 1123–1133 (RGRSPRSPSGH) shows a compositional bias: low complexity. Phosphoserine is present on residues Ser1126, Ser1129, Ser1131, and Ser1141. Phosphoserine; by PKB/AKT1 is present on Ser1143. Phosphoserine is present on Ser1146. Ig-like C2-type domains are found at residues 1160 to 1251 (PHFL…LVVA) and 1259 to 1349 (PVFM…ARLD). 2 interaction with EZR regions span residues 1162–1251 (FLQA…LVVA) and 1261–1351 (FMEK…LDVY). A disulfide bridge connects residues Cys1181 and Cys1233. The residue at position 1377 (Ser1377) is a Phosphoserine.

This sequence belongs to the myotilin/palladin family. In terms of assembly, interacts with EPS8. Interacts with LASP1. Interacts with VASP. Interacts with ACTN. Interacts with SORBS2. Interacts with PFN1. Interacts with LPP. Interacts with SPIN90. Interacts with SRC. Interacts with EZR. Interacts with RAI14. In terms of processing, phosphorylated predominantly on serines and, to a lesser extent, on tyrosines. Phosphorylation at Ser-1143 by PKB/AKT1 modulates cytoskeletal organization and cell motility. Detected in both muscle and non-muscle tissues and cells (at protein level). Isoform 3 is widely expressed, isoform 4 is particularly abundant in tissues rich in smooth muscle and in the cardiac muscle and isoform 1 is detected in heart.

Its subcellular location is the cytoplasm. The protein localises to the cytoskeleton. The protein resides in the cell junction. It localises to the focal adhesion. It is found in the myofibril. Its subcellular location is the sarcomere. The protein localises to the z line. The protein resides in the cell projection. It localises to the ruffle. It is found in the podosome. Its subcellular location is the lamellipodium. The protein localises to the axon. The protein resides in the growth cone. Cytoskeletal protein required for organization of normal actin cytoskeleton. Roles in establishing cell morphology, motility, cell adhesion and cell-extracellular matrix interactions in a variety of cell types. May function as a scaffolding molecule with the potential to influence both actin polymerization and the assembly of existing actin filaments into higher-order arrays. Binds to proteins that bind to either monomeric or filamentous actin. Localizes at sites where active actin remodeling takes place, such as lamellipodia and membrane ruffles. Different isoforms may have functional differences. Involved in the control of morphological and cytoskeletal changes associated with dendritic cell maturation. Involved in targeting ACTN to specific subcellular locations. May be required for the initiation of neural tube closure. In Mus musculus (Mouse), this protein is Palladin (Palld).